A 155-amino-acid polypeptide reads, in one-letter code: Glutaredoxin-related protein 5, mitochondrial (155 aa).

A mitochondrion-targeting transit peptide spans 1–14 (MNSVFRSTARCLRS). The Glutaredoxin domain maps to 42–145 (QKNLEEMVKK…EELQKLGIRS (104 aa)). Lys-59 is a glutathione binding site. Cys-67 contributes to the [2Fe-2S] cluster binding site. Glutathione contacts are provided by residues 97 to 101 (RQGIK), Ile-109, and 122 to 123 (CD).

As to quaternary structure, homodimer.

It is found in the mitochondrion. Monothiol glutaredoxin involved in mitochondrial iron-sulfur (Fe/S) cluster transfer. Receives iron-sulfur clusters from scaffold protein ISCU and mediates their transfer to apoproteins, to the 4Fe/FS cluster biosynthesis machinery, or export from mitochondrion. Required for normal hemoglobin biosynthesis. The protein is Glutaredoxin-related protein 5, mitochondrial (glrx5) of Danio rerio (Zebrafish).